A 139-amino-acid chain; its full sequence is D-ribose pyranase (139 aa).

The active-site Proton donor is His20. Substrate-binding positions include Asp28, His106, and 128 to 130 (YAN).

This sequence belongs to the RbsD / FucU family. RbsD subfamily. As to quaternary structure, homodecamer.

It is found in the cytoplasm. The catalysed reaction is beta-D-ribopyranose = beta-D-ribofuranose. Its pathway is carbohydrate metabolism; D-ribose degradation; D-ribose 5-phosphate from beta-D-ribopyranose: step 1/2. In terms of biological role, catalyzes the interconversion of beta-pyran and beta-furan forms of D-ribose. In Maridesulfovibrio salexigens (strain ATCC 14822 / DSM 2638 / NCIMB 8403 / VKM B-1763) (Desulfovibrio salexigens), this protein is D-ribose pyranase.